A 65-amino-acid chain; its full sequence is Large ribosomal subunit protein bL35 (65 aa).

It belongs to the bacterial ribosomal protein bL35 family.

This is Large ribosomal subunit protein bL35 from Buchnera aphidicola subsp. Acyrthosiphon pisum (strain 5A).